A 399-amino-acid chain; its full sequence is Phosphoglycerate kinase (399 aa).

Substrate is bound by residues 24-26 (DLN), Arg-41, 64-67 (HLGR), Arg-123, and Arg-160. Residues Lys-210, Gly-298, Glu-329, and 355–358 (GGDS) each bind ATP.

It belongs to the phosphoglycerate kinase family. Monomer.

The protein resides in the cytoplasm. The enzyme catalyses (2R)-3-phosphoglycerate + ATP = (2R)-3-phospho-glyceroyl phosphate + ADP. It participates in carbohydrate degradation; glycolysis; pyruvate from D-glyceraldehyde 3-phosphate: step 2/5. This Salinispora tropica (strain ATCC BAA-916 / DSM 44818 / JCM 13857 / NBRC 105044 / CNB-440) protein is Phosphoglycerate kinase.